Here is a 205-residue protein sequence, read N- to C-terminus: Putative 3-methyladenine DNA glycosylase (205 aa).

This sequence belongs to the DNA glycosylase MPG family.

In Staphylococcus epidermidis (strain ATCC 35984 / DSM 28319 / BCRC 17069 / CCUG 31568 / BM 3577 / RP62A), this protein is Putative 3-methyladenine DNA glycosylase.